The primary structure comprises 212 residues: Proteasome subunit beta 2 (212 aa).

A propeptide spans 1–15 (MLHHPGTGQLRALKG) (removed in mature form; by autocatalysis). The active-site Nucleophile is the Thr-16.

It belongs to the peptidase T1B family. As to quaternary structure, the 20S proteasome core is composed of 14 alpha and 14 beta subunits that assemble into four stacked heptameric rings, resulting in a barrel-shaped structure. The two inner rings, each composed of seven catalytic beta subunits, are sandwiched by two outer rings, each composed of seven alpha subunits. The catalytic chamber with the active sites is on the inside of the barrel. Has a gated structure, the ends of the cylinder being occluded by the N-termini of the alpha-subunits. Is capped at one or both ends by the proteasome regulatory ATPase, PAN.

It is found in the cytoplasm. The catalysed reaction is Cleavage of peptide bonds with very broad specificity.. Its activity is regulated as follows. The formation of the proteasomal ATPase PAN-20S proteasome complex, via the docking of the C-termini of PAN into the intersubunit pockets in the alpha-rings, triggers opening of the gate for substrate entry. Interconversion between the open-gate and close-gate conformations leads to a dynamic regulation of the 20S proteasome proteolysis activity. In terms of biological role, component of the proteasome core, a large protease complex with broad specificity involved in protein degradation. The polypeptide is Proteasome subunit beta 2 (Hyperthermus butylicus (strain DSM 5456 / JCM 9403 / PLM1-5)).